We begin with the raw amino-acid sequence, 804 residues long: Tubulin polyglutamylase TTLL13 (804 aa).

Positions 1-41 (MEPNNCKTSESEEDDIEEEESEEECVREESTTPNSTQQALR) are disordered. Positions 4-30 (NNCKTSESEEDDIEEEESEEECVREES) form a coiled coil. Residues 11-26 (SEEDDIEEEESEEECV) are compositionally biased toward acidic residues. The TTL domain maps to 85–430 (RRPLAINLTN…RGCDKKKVIE (346 aa)). ATP contacts are provided by residues Lys-202, 208-209 (QG), 230-233 (QQYI), and 243-245 (KFD). Gln-208 lines the a protein pocket. Position 269 (Arg-269) interacts with L-glutamate. 291–292 (TN) contributes to the ATP binding site. L-glutamate is bound by residues Tyr-293 and Lys-311. 3 residues coordinate Mg(2+): Asp-376, Glu-389, and Asn-391. A protein is bound at residue His-392. Positions 401–482 (RLDREVKDAL…LGGYRRIYPG (82 aa)) are c-MTBD region. Lys-407 is a binding site for L-glutamate. 2 coiled-coil regions span residues 504-541 (ASKA…KEQN) and 585-609 (QDIV…IRSL). Residues 519–556 (IRLKQEQQENPGTKKRKENKEQNQGESAGEKSRSRTAT) form a disordered region. Residues 536–551 (ENKEQNQGESAGEKSR) are compositionally biased toward basic and acidic residues.

It belongs to the tubulin--tyrosine ligase family. Requires Mg(2+) as cofactor. In terms of tissue distribution, highly expressed in heart and testis. Expressed in brain, kidney, liver, lung, muscle and trachea. In the brain, expressed in ependymal cilia, cortex, corpus callosum and striatum.

The enzyme catalyses (L-glutamyl)(n)-gamma-L-glutamyl-L-glutamyl-[protein] + L-glutamate + ATP = (L-glutamyl)(n+1)-gamma-L-glutamyl-L-glutamyl-[protein] + ADP + phosphate + H(+). Polyglutamylase which modifies tubulin, generating polyglutamate side chains of variable lengths on the gamma-carboxyl group of specific glutamate residues within the C-terminal tail of tubulin. Mediates ATP-dependent polyglutamate side-chain elongation of the polyglutamylation reaction but not the initiation step. Preferentially modifies the alpha-tubulin tail over a beta-tail. The polypeptide is Tubulin polyglutamylase TTLL13 (Mus musculus (Mouse)).